The sequence spans 132 residues: Small ribosomal subunit protein uS8 (132 aa).

It belongs to the universal ribosomal protein uS8 family. In terms of assembly, part of the 30S ribosomal subunit. Contacts proteins S5 and S12.

One of the primary rRNA binding proteins, it binds directly to 16S rRNA central domain where it helps coordinate assembly of the platform of the 30S subunit. This Rickettsia typhi (strain ATCC VR-144 / Wilmington) protein is Small ribosomal subunit protein uS8.